A 479-amino-acid polypeptide reads, in one-letter code: Arf-GAP domain and FG repeat-containing protein 2 (479 aa).

The Arf-GAP domain maps to 27 to 153 (EVWCRRVREL…WYVPPEQVKG (127 aa)). The segment at 47-70 (CFECAQRGVTYVDITVGSFVCTTC) adopts a C4-type zinc-finger fold. Disordered stretches follow at residues 150–223 (QVKG…TKKA) and 450–479 (LSQPAGISTNPFMTGSSAFASKPPTTNPFL). The span at 157–167 (SKGSVSATPVQ) shows a compositional bias: polar residues. Position 174 is an N6-acetyllysine (Lys174). Low complexity predominate over residues 194 to 218 (SSQPGSQSQARSSSQARSSQPPSHS). Polar residues predominate over residues 454-479 (AGISTNPFMTGSSAFASKPPTTNPFL).

In terms of assembly, interacts with EPS15R.

The sequence is that of Arf-GAP domain and FG repeat-containing protein 2 (Agfg2) from Mus musculus (Mouse).